We begin with the raw amino-acid sequence, 305 residues long: tRNA pseudouridine synthase B (305 aa).

Asp39 functions as the Nucleophile in the catalytic mechanism.

This sequence belongs to the pseudouridine synthase TruB family. Type 1 subfamily.

It carries out the reaction uridine(55) in tRNA = pseudouridine(55) in tRNA. Functionally, responsible for synthesis of pseudouridine from uracil-55 in the psi GC loop of transfer RNAs. The sequence is that of tRNA pseudouridine synthase B from Staphylococcus aureus (strain Mu50 / ATCC 700699).